We begin with the raw amino-acid sequence, 121 residues long: Heimdall profilin (121 aa).

It belongs to the Asgard profilin family.

The protein resides in the cytoplasm. Its subcellular location is the cytoskeleton. Binds to actin and affects the structure of the cytoskeleton. At high concentrations inhibits spontaneous rabbit actin nucleation. This strongly suggests this archaea has a profilin-regulated actin system, and actin-type genes can be identified in this organism. The polypeptide is Heimdall profilin (Heimdallarchaeota archaeon (strain LC_2)).